Consider the following 117-residue polypeptide: Small ribosomal subunit protein bS6 (117 aa).

The interval 92–117 is disordered; that stretch reads KVDEHPEGPSIQMQKREERDNRRERR. A compositionally biased stretch (basic and acidic residues) spans 105–117; sequence QKREERDNRRERR.

This sequence belongs to the bacterial ribosomal protein bS6 family.

In terms of biological role, binds together with bS18 to 16S ribosomal RNA. This chain is Small ribosomal subunit protein bS6, found in Dinoroseobacter shibae (strain DSM 16493 / NCIMB 14021 / DFL 12).